Reading from the N-terminus, the 261-residue chain is Hydrolase in agr operon (261 aa).

One can recognise a CN hydrolase domain in the interval methionine 1–leucine 239. Glutamate 41 functions as the Proton acceptor in the catalytic mechanism. Catalysis depends on lysine 110, which acts as the Proton donor. Cysteine 146 (nucleophile) is an active-site residue.

Belongs to the carbon-nitrogen hydrolase superfamily. NIT1/NIT2 family.

The polypeptide is Hydrolase in agr operon (Staphylococcus aureus).